A 287-amino-acid polypeptide reads, in one-letter code: ATP synthase gamma chain (287 aa).

This sequence belongs to the ATPase gamma chain family. As to quaternary structure, F-type ATPases have 2 components, CF(1) - the catalytic core - and CF(0) - the membrane proton channel. CF(1) has five subunits: alpha(3), beta(3), gamma(1), delta(1), epsilon(1). CF(0) has three main subunits: a, b and c.

The protein resides in the cell inner membrane. Produces ATP from ADP in the presence of a proton gradient across the membrane. The gamma chain is believed to be important in regulating ATPase activity and the flow of protons through the CF(0) complex. The sequence is that of ATP synthase gamma chain from Baumannia cicadellinicola subsp. Homalodisca coagulata.